A 181-amino-acid chain; its full sequence is Keratin-associated protein 4-5 (181 aa).

26 consecutive repeat copies span residues 5–9 (CCGSV), 20–24 (CCRPS), 25–29 (CCQTT), 30–34 (CCRTT), 35–39 (CCRPS), 40–44 (CCKPQ), 45–49 (CCQSV), 55–59 (CCHPS), 60–64 (CCISS), 65–69 (CCRPY), 70–74 (CCESS), 75–79 (CCRPC), 80–84 (CCQTT), 85–89 (CCRTT), 90–94 (CCRTT), 95–99 (CCCPS), 100–104 (CCVSS), 105–109 (CCRPQ), 110–114 (CCQSV), 115–119 (CCQPT), 120–124 (CCRPS), 125–129 (CCISS), 130–134 (CCHPS), 135–139 (CCESS), 140–144 (CCRPC), and 145–149 (CCVRP). Positions 5 to 154 (CCGSVSSEQS…CCVRPVCGRV (150 aa)) are 26 X 5 AA repeats of C-C-[GRQVCHIEK]-[SPTR]-[VSTQYC].

This sequence belongs to the KRTAP type 4 family. In terms of assembly, interacts with hair keratins. As to expression, expressed in the hair follicles.

In the hair cortex, hair keratin intermediate filaments are embedded in an interfilamentous matrix, consisting of hair keratin-associated proteins (KRTAP), which are essential for the formation of a rigid and resistant hair shaft through their extensive disulfide bond cross-linking with abundant cysteine residues of hair keratins. The matrix proteins include the high-sulfur and high-glycine-tyrosine keratins. The polypeptide is Keratin-associated protein 4-5 (KRTAP4-5) (Homo sapiens (Human)).